Consider the following 2193-residue polypeptide: Genome polyprotein (2193 aa).

The tract at residues 1 to 22 is disordered; it reads MGSQVSTQRSGSHENSNSATEG. Gly2 is lipidated: N-myristoyl glycine; by host. The Cytoplasmic portion of the chain corresponds to 2-1503; the sequence is GSQVSTQRSG…HLNRAVLVMQ (1502 aa). Amphipathic alpha-helix stretches follow at residues 566–588 and 568–588; these read GDRVADVIESSIGDSVSRALTQA and RVADVIESSIGDSVSRALTQA. Active-site for protease 2A activity residues include His883 and Asp901. Zn(2+) is bound by residues Cys918 and Cys920. Cys972 acts as the For protease 2A activity in catalysis. Residues Cys978 and His980 each contribute to the Zn(2+) site. Residues 1112–1184 are membrane-binding; it reads SASWLKKFND…EQSAASQEDL (73 aa). The interval 1112-1250 is oligomerization; it reads SASWLKKFND…SPGTGKSLAT (139 aa). The tract at residues 1133–1137 is RNA-binding; that stretch reads SNKIS. The SF3 helicase domain occupies 1216–1374; the sequence is EKRMNNYMQF…YKTDLGRLDA (159 aa). 1240 to 1247 is an ATP binding site; sequence GSPGTGKS. The Zn(2+) site is built by Cys1381, Cys1392, Ser1393, and Cys1397. The C4-type; degenerate zinc-finger motif lies at 1381–1397; it reads CSENNTANFKRCSPLVC. The interval 1424 to 1431 is RNA-binding; the sequence is EYSNRSAI. The oligomerization stretch occupies residues 1435-1440; the sequence is IEALFQ. The stretch at 1504 to 1519 is an intramembrane region; the sequence is SIATVVAVVSLVYVIY. Residues 1520 to 2193 lie on the Cytoplasmic side of the membrane; it reads KLFAGFQGAY…NLRRNWLELF (674 aa). Residue Tyr1529 is modified to O-(5'-phospho-RNA)-tyrosine. The Peptidase C3 domain occupies 1549 to 1727; the sequence is GPSLDFALSL…FCAGLKRSYF (179 aa). Catalysis depends on for protease 3C activity residues His1588, Glu1619, and Cys1695. In terms of domain architecture, RdRp catalytic spans 1958 to 2073; the sequence is GSLFAFDYSG…ASYPFPIDCL (116 aa). Residues Asp1964 and Asp2060 each coordinate Mg(2+).

The protein belongs to the picornaviruses polyprotein family. In terms of assembly, interacts with capsid protein VP1 and capsid protein VP3 to form heterotrimeric protomers. As to quaternary structure, interacts with capsid protein VP0, and capsid protein VP3 to form heterotrimeric protomers. Five protomers subsequently associate to form pentamers which serve as building blocks for the capsid. Interacts with capsid protein VP2, capsid protein VP3 and capsid protein VP4 following cleavage of capsid protein VP0. Interacts with host SCARB2. Interacts with host ARF6; this interaction mediates viral endocytosis. Interacts with capsid protein VP1 and capsid protein VP3 in the mature capsid. Interacts with host SCARB2. In terms of assembly, interacts with capsid protein VP0 and capsid protein VP1 to form heterotrimeric protomers. Five protomers subsequently associate to form pentamers which serve as building blocks for the capsid. Interacts with capsid protein VP4 in the mature capsid. Interacts with protein 2C; this interaction may be important for virion morphogenesis. As to quaternary structure, interacts with capsid protein VP1 and capsid protein VP3. Homodimer. In terms of assembly, interacts with host BAX; this interaction activates the mitochondrial apoptotic pathway. Interacts with host ILF2. As to quaternary structure, homohexamer; forms a hexameric ring structure with 6-fold symmetry characteristic of AAA+ ATPases. Interacts (via N-terminus) with host RTN3 (via reticulon domain); this interaction is important for viral replication. Interacts with capsid protein VP3; this interaction may be important for virion morphogenesis. Interacts with protein 3CD. In terms of assembly, homodimer. Interacts with host GBF1. Interacts (via GOLD domain) with host ACBD3 (via GOLD domain); this interaction allows the formation of a viral protein 3A/ACBD3 heterotetramer with a 2:2 stoichiometry, which will stimulate the recruitment of host PI4KB in order to synthesize PI4P at the viral RNA replication sites. As to quaternary structure, interacts with RNA-directed RNA polymerase. Interacts with host IFIH1/MDA5; this interaction inhibits host IFIH1. Interacts with host RIGI. In terms of assembly, interacts with protein 3AB and with RNA-directed RNA polymerase. As to quaternary structure, interacts with Viral protein genome-linked and with protein 3CD. The cofactor is Mg(2+). In terms of processing, specific enzymatic cleavages in vivo by the viral proteases yield processing intermediates and the mature proteins. Myristoylation is required for the formation of pentamers during virus assembly. Further assembly of 12 pentamers and a molecule of genomic RNA generates the provirion. Post-translationally, during virion maturation, immature virions are rendered infectious following cleavage of VP0 into VP4 and VP2. This maturation seems to be an autocatalytic event triggered by the presence of RNA in the capsid and it is followed by a conformational change infectious virion. In terms of processing, myristoylation is required during RNA encapsidation and formation of the mature virus particle. VPg is uridylylated by the polymerase into VPg-pUpU. This acts as a nucleotide-peptide primer for the genomic RNA replication.

It localises to the virion. It is found in the host cytoplasm. The protein localises to the host cytoplasmic vesicle membrane. Its subcellular location is the host nucleus. It carries out the reaction a ribonucleoside 5'-triphosphate + H2O = a ribonucleoside 5'-diphosphate + phosphate + H(+). The enzyme catalyses Selective cleavage of Tyr-|-Gly bond in the picornavirus polyprotein.. The catalysed reaction is RNA(n) + a ribonucleoside 5'-triphosphate = RNA(n+1) + diphosphate. It catalyses the reaction Selective cleavage of Gln-|-Gly bond in the poliovirus polyprotein. In other picornavirus reactions Glu may be substituted for Gln, and Ser or Thr for Gly.. With respect to regulation, replication or transcription is subject to high level of random mutations by the nucleotide analog ribavirin. Its function is as follows. Forms an icosahedral capsid of pseudo T=3 symmetry with capsid proteins VP2 and VP3. The capsid is 300 Angstroms in diameter, composed of 60 copies of each capsid protein and enclosing the viral positive strand RNA genome. Capsid protein VP1 mainly forms the vertices of the capsid. Capsid protein VP1, together with VP2, interacts with host cell receptor SCARB2 to provide virion attachment to target host cells. This attachment induces virion internalization. This attachment induces virion internalization. After binding to its receptor, the capsid undergoes conformational changes. Capsid protein VP1 N-terminus (that contains an amphipathic alpha-helix) and capsid protein VP4 are externalized. Together, they shape a pore in the host membrane through which viral genome is translocated to host cell cytoplasm. Functionally, forms an icosahedral capsid of pseudo T=3 symmetry with capsid proteins VP2 and VP3. The capsid is 300 Angstroms in diameter, composed of 60 copies of each capsid protein and enclosing the viral positive strand RNA genome. Capsid protein VP2, together with VP1, interacts with host cell receptor SCARB2 to provide virion attachment to target host cells. In terms of biological role, forms an icosahedral capsid of pseudo T=3 symmetry with capsid proteins VP2 and VP3. The capsid is 300 Angstroms in diameter, composed of 60 copies of each capsid protein and enclosing the viral positive strand RNA genome. Lies on the inner surface of the capsid shell. After binding to the host receptor, the capsid undergoes conformational changes. Capsid protein VP4 is released, Capsid protein VP1 N-terminus is externalized, and together, they shape a pore in the host membrane through which the viral genome is translocated into the host cell cytoplasm. Its function is as follows. Component of immature procapsids, which is cleaved into capsid proteins VP4 and VP2 after maturation. Allows the capsid to remain inactive before the maturation step. Functionally, cysteine protease that cleaves viral polyprotein and specific host proteins. It is responsible for the autocatalytic cleavage between the P1 and P2 regions, which is the first cleavage occurring in the polyprotein. Also cleaves the host translation initiation factor EIF4G1, in order to shut down the capped cellular mRNA translation. Inhibits the host nucleus-cytoplasm protein and RNA trafficking by cleaving host members of the nuclear pores. Counteracts stress granule formation probably by antagonizing its assembly or promoting its dissassembly. Cleaves and inhibits host IFIH1/MDA5, thereby inhibiting the type-I IFN production and the establishment of the antiviral state. Cleaves and inhibits host MAVS, thereby inhibiting the type-I IFN production and the establishment of the antiviral state. In terms of biological role, plays an essential role in the virus replication cycle by acting as a viroporin. Creates a pore in the host endoplasmic reticulum and as a consequence releases Ca2+ in the cytoplasm of infected cell. In turn, high levels of cytoplasmic calcium may trigger membrane trafficking and transport of viral ER-associated proteins to viroplasms, sites of viral genome replication. Also activates the mitochondrial apoptotic pathway by activating host BAX. Induces and associates with structural rearrangements of intracellular membranes. Displays RNA-binding, nucleotide binding and NTPase activities. May play a role in virion morphogenesis and viral RNA encapsidation by interacting with the capsid protein VP3. Its function is as follows. Localizes the viral replication complex to the surface of membranous vesicles. Together with protein 3CD binds the Cis-Active RNA Element (CRE) which is involved in RNA synthesis initiation. Acts as a cofactor to stimulate the activity of 3D polymerase, maybe through a nucleid acid chaperone activity. Functionally, localizes the viral replication complex to the surface of membranous vesicles. It inhibits host cell endoplasmic reticulum-to-Golgi apparatus transport and causes the disassembly of the Golgi complex, possibly through GBF1 interaction. This would result in depletion of MHC, trail receptors and IFN receptors at the host cell surface. Plays an essential role in viral RNA replication by recruiting ACBD3 and PI4KB at the viral replication sites, thereby allowing the formation of the rearranged membranous structures where viral replication takes place. In terms of biological role, acts as a primer for viral RNA replication and remains covalently bound to viral genomic RNA. VPg is uridylylated prior to priming replication into VPg-pUpU. The oriI viral genomic sequence may act as a template for this. The VPg-pUpU is then used as primer on the genomic RNA poly(A) by the RNA-dependent RNA polymerase to replicate the viral genome. During genome replication, the VPg-RNA linkage is removed by the host TDP2, thereby accelerating replication. During the late stage of the replication cycle, host TDP2 is excluded from sites of viral RNA synthesis and encapsidation, allowing for the generation of progeny virions. Involved in the viral replication complex and viral polypeptide maturation. It exhibits protease activity with a specificity and catalytic efficiency that is different from protease 3C. Protein 3CD lacks polymerase activity. Protein 3CD binds to the 5'UTR of the viral genome. Its function is as follows. Major viral protease that mediates proteolytic processing of the polyprotein. Cleaves host EIF5B, contributing to host translation shutoff. Also cleaves host PABPC1, contributing to host translation shutoff. Disassembles host cytoplasmic stress granules by cleaving host G3BP1, although this effect is less prononced than the inhibition induced by protease 2A. Cleaves host RIGI and thus contributes to the inhibition of type I interferon production. Cleaves host IRF7 and thus contributes to the inhibition of type I interferon production. Cleaves host HNRNPA1 thereby increasing the translation of apoptosis protease activating factor APAF1, leading to apoptosis of the host cell. Cleaves host NLRP1, triggers host N-glycine-mediated degradation of the autoinhibitory NLRP1 N-terminal fragment. Functionally, replicates the viral genomic RNA on the surface of intracellular membranes. May form linear arrays of subunits that propagate along a strong head-to-tail interaction called interface-I. Covalently attaches UMP to a tyrosine of VPg, which is used to prime RNA synthesis. The positive stranded RNA genome is first replicated at virus induced membranous vesicles, creating a dsRNA genomic replication form. This dsRNA is then used as template to synthesize positive stranded RNA genomes. ss(+)RNA genomes are either translated, replicated or encapsidated. The protein is Genome polyprotein of Homo sapiens (Human).